The chain runs to 112 residues: CRISPR-associated endoribonuclease Cas2 2 (112 aa).

Asp15 is a binding site for Mg(2+).

Belongs to the CRISPR-associated endoribonuclease Cas2 protein family. Homodimer, forms a heterotetramer with a Cas1 homodimer. Requires Mg(2+) as cofactor.

CRISPR (clustered regularly interspaced short palindromic repeat), is an adaptive immune system that provides protection against mobile genetic elements (viruses, transposable elements and conjugative plasmids). CRISPR clusters contain sequences complementary to antecedent mobile elements and target invading nucleic acids. CRISPR clusters are transcribed and processed into CRISPR RNA (crRNA). Functions as a ssRNA-specific endoribonuclease. Involved in the integration of spacer DNA into the CRISPR cassette. The sequence is that of CRISPR-associated endoribonuclease Cas2 2 from Rhodospirillum rubrum (strain ATCC 11170 / ATH 1.1.1 / DSM 467 / LMG 4362 / NCIMB 8255 / S1).